The sequence spans 93 residues: Late embryogenesis abundant protein B19.1A (93 aa).

Residues 1 to 93 are disordered; sequence MASGQQERSQ…IDESKFKTKS (93 aa). Basic and acidic residues-rich tracts occupy residues 9–19 and 73–93; these read SQLDRKAREGE and GGER…KTKS.

Belongs to the small hydrophilic plant seed protein family. In terms of tissue distribution, embryos and young seedlings.

In terms of biological role, lea proteins are late embryonic proteins abundant in higher plant seed embryos. It may have a role in desiccation tolerance by acting as an osmoprotective protein or as a desiccation-damage repair protein. This is Late embryogenesis abundant protein B19.1A (B19.1A) from Hordeum vulgare (Barley).